The chain runs to 944 residues: UvrABC system protein A (944 aa).

Residue Gly-31–Ser-38 coordinates ATP. A C4-type zinc finger spans residues Cys-253–Cys-280. 2 ABC transporter domains span residues Trp-309–Leu-586 and Arg-606–Lys-936. Gly-639–Ser-646 contributes to the ATP binding site. The C4-type zinc-finger motif lies at Cys-739–Cys-765.

Belongs to the ABC transporter superfamily. UvrA family. As to quaternary structure, forms a heterotetramer with UvrB during the search for lesions.

Its subcellular location is the cytoplasm. The UvrABC repair system catalyzes the recognition and processing of DNA lesions. UvrA is an ATPase and a DNA-binding protein. A damage recognition complex composed of 2 UvrA and 2 UvrB subunits scans DNA for abnormalities. When the presence of a lesion has been verified by UvrB, the UvrA molecules dissociate. This is UvrABC system protein A from Pseudomonas putida (strain ATCC 47054 / DSM 6125 / CFBP 8728 / NCIMB 11950 / KT2440).